We begin with the raw amino-acid sequence, 177 residues long: Large ribosomal subunit protein uL6 (177 aa).

This sequence belongs to the universal ribosomal protein uL6 family. Part of the 50S ribosomal subunit.

In terms of biological role, this protein binds to the 23S rRNA, and is important in its secondary structure. It is located near the subunit interface in the base of the L7/L12 stalk, and near the tRNA binding site of the peptidyltransferase center. This chain is Large ribosomal subunit protein uL6, found in Actinobacillus succinogenes (strain ATCC 55618 / DSM 22257 / CCUG 43843 / 130Z).